Reading from the N-terminus, the 232-residue chain is Orotidine 5'-phosphate decarboxylase (232 aa).

Residues Asp13, Lys35, 62 to 71, Thr122, Arg182, Gln191, Gly211, and Arg212 each bind substrate; that span reads DLKFHDIPNT. Lys64 acts as the Proton donor in catalysis.

It belongs to the OMP decarboxylase family. Type 1 subfamily. In terms of assembly, homodimer.

It catalyses the reaction orotidine 5'-phosphate + H(+) = UMP + CO2. It participates in pyrimidine metabolism; UMP biosynthesis via de novo pathway; UMP from orotate: step 2/2. Catalyzes the decarboxylation of orotidine 5'-monophosphate (OMP) to uridine 5'-monophosphate (UMP). The protein is Orotidine 5'-phosphate decarboxylase of Pseudomonas syringae pv. tomato (strain ATCC BAA-871 / DC3000).